We begin with the raw amino-acid sequence, 372 residues long: Protein phosphatase Mn(2+)-dependent 1K (372 aa).

A mitochondrion-targeting transit peptide spans 1 to 29 (MSTAALLTLVRSGGNQVRRRVLLRARGLQ). The segment at 46 to 61 (KWSRFDPDGSGRPATW) is critical for association with the BCKDH complex. Residues 94 to 346 (NVGSASQIGK…DNTTAVVVPF (253 aa)) enclose the PPM-type phosphatase domain. Mn(2+) is bound by residues D127 and G128. At S248 the chain carries Phosphoserine. Residues D298 and D337 each coordinate Mn(2+).

Belongs to the PP2C family. As to quaternary structure, monomer. Interacts with E1 and E2 components of the branched-chain alpha-ketoacid dehydrogenase (BCKDH) complex; this interaction requires colocalization in mitochondria. Interacts with BCKDHA but not with BCKDHB of the E1 component. Interacts with the 24-meric E2 core composed of DBT monomers with a 24:1 stoichiometry; the N-terminal region (residues 49-61) of PPM1K and C-terminal linker of the lipoyl domain of DBT (residues 145-160) are critical for this interaction, whereas the lipoyl prosthetic group is dispensable. Competes with BCKDK for binding to the E2 core; this interaction is modulated by branched-chain alpha-keto acids. At steady state, BCKDH holoenzyme preferentially binds BCKDK and BCKDHA is phosphorylated. In response to high levels of branched-chain alpha-keto acids, the inhibitory BCKDK is replaced by activating PPM1K leading to BCKDHA dephosphorylation and BCAA degradation. Mn(2+) is required as a cofactor.

It localises to the mitochondrion matrix. It catalyses the reaction O-phospho-L-seryl-[3-methyl-2-oxobutanoate dehydrogenase] + H2O = L-seryl-[3-methyl-2-oxobutanoate dehydrogenase] + phosphate. The catalysed reaction is O-phospho-L-seryl-[protein] + H2O = L-seryl-[protein] + phosphate. The protein operates within protein modification. Its function is as follows. Serine/threonine-protein phosphatase component of macronutrients metabolism. Forms a functional kinase and phosphatase pair with BCKDK, serving as a metabolic regulatory node that coordinates branched-chain amino acids (BCAAs) with glucose and lipid metabolism via two distinct phosphoprotein targets: mitochondrial BCKDHA subunit of the branched-chain alpha-ketoacid dehydrogenase (BCKDH) complex and cytosolic ACLY, a lipogenic enzyme of Krebs cycle. At high levels of branched-chain ketoacids, dephosphorylates and activates mitochondrial BCKDH complex, a multisubunit complex consisting of three multimeric components each involved in different steps of BCAA catabolism: E1 composed of BCKDHA and BCKDHB, E2 core composed of DBT monomers, and E3 composed of DLD monomers. Tightly associates with the E2 component of BCKDH complex and dephosphorylates BCKDHA on Ser-347. Regulates the reversible phosphorylation of ACLY in response to changes in cellular carbohydrate abundance such as occurs during fasting to feeding metabolic transition. At fasting state, appears to dephosphorylate ACLY on Ser-455 and inactivate it. Refeeding stimulates MLXIPL/ChREBP transcription factor, leading to increased BCKDK to PPM1K expression ratio, phosphorylation and activation of ACLY that ultimately results in the generation of malonyl-CoA and oxaloacetate immediate substrates of de novo lipogenesis and gluconeogenesis, respectively. Recognizes phosphosites having SxS or RxxS motifs and strictly depends on Mn(2+) ions for the phosphatase activity. Regulates Ca(2+)-induced opening of mitochondrial transition pore and apoptotic cell death. The polypeptide is Protein phosphatase Mn(2+)-dependent 1K (PPM1K) (Bos taurus (Bovine)).